Consider the following 330-residue polypeptide: Succinoglycan biosynthesis protein ExoA (330 aa).

Helical transmembrane passes span 116-136, 260-280, and 299-319; these read ALAT…FSTF, IAFG…VGVW, and YGPL…AGFW.

This sequence belongs to the glycosyltransferase 2 family.

The protein localises to the cell membrane. Its pathway is glycan metabolism; exopolysaccharide biosynthesis. Functionally, glycosyltransferase required for the synthesis of succinoglycan (EPS I). Needed for the addition of the second sugar (glucose). Catalyzes the formation of a beta-1,3 linkage with the galactose lipid carrier. The protein is Succinoglycan biosynthesis protein ExoA (exoA) of Rhizobium meliloti (strain 1021) (Ensifer meliloti).